The following is a 360-amino-acid chain: sn-glycerol-3-phosphate import ATP-binding protein UgpC (360 aa).

Residues 4-235 (LSLKGVRKSY…PATTFVASFI (232 aa)) enclose the ABC transporter domain. 37–44 (GPSGCGKS) contributes to the ATP binding site.

The protein belongs to the ABC transporter superfamily. sn-glycerol-3-phosphate importer (TC 3.A.1.1.3) family. In terms of assembly, the complex is composed of two ATP-binding proteins (UgpC), two transmembrane proteins (UgpA and UgpE) and a solute-binding protein (UgpB).

Its subcellular location is the cell inner membrane. It catalyses the reaction sn-glycerol 3-phosphate(out) + ATP + H2O = sn-glycerol 3-phosphate(in) + ADP + phosphate + H(+). Part of the ABC transporter complex UgpBAEC involved in sn-glycerol-3-phosphate (G3P) import. Responsible for energy coupling to the transport system. The protein is sn-glycerol-3-phosphate import ATP-binding protein UgpC of Burkholderia thailandensis (strain ATCC 700388 / DSM 13276 / CCUG 48851 / CIP 106301 / E264).